The following is a 77-amino-acid chain: Small ribosomal subunit protein bS18 (77 aa).

The protein belongs to the bacterial ribosomal protein bS18 family. Part of the 30S ribosomal subunit. Forms a tight heterodimer with protein bS6.

Functionally, binds as a heterodimer with protein bS6 to the central domain of the 16S rRNA, where it helps stabilize the platform of the 30S subunit. In Bacillus thuringiensis subsp. konkukian (strain 97-27), this protein is Small ribosomal subunit protein bS18.